The primary structure comprises 75 residues: Molt-inhibiting hormone (75 aa).

3 disulfide bridges follow: cysteine 7-cysteine 44, cysteine 24-cysteine 40, and cysteine 27-cysteine 53. An Alanine amide modification is found at alanine 75.

This sequence belongs to the arthropod CHH/MIH/GIH/VIH hormone family.

It localises to the secreted. In terms of biological role, inhibits Y-organs where molting hormone (ecdysteroid) is secreted. A molting cycle is initiated when MIH secretion diminishes or stops. This chain is Molt-inhibiting hormone, found in Procambarus clarkii (Red swamp crayfish).